The chain runs to 159 residues: Large ribosomal subunit protein uL22c (159 aa).

The protein belongs to the universal ribosomal protein uL22 family. Part of the 50S ribosomal subunit.

It localises to the plastid. The protein localises to the chloroplast. In terms of biological role, this protein binds specifically to 23S rRNA. Functionally, the globular domain of the protein is located near the polypeptide exit tunnel on the outside of the subunit, while an extended beta-hairpin is found that lines the wall of the exit tunnel in the center of the 70S ribosome. The chain is Large ribosomal subunit protein uL22c (rpl22) from Ipomoea purpurea (Common morning glory).